The primary structure comprises 85 residues: Phosphocarrier protein HPr (85 aa).

One can recognise an HPr domain in the interval 1–85 (MFQQEVTITA…HLVKLMAELE (85 aa)). Catalysis depends on His-15, which acts as the Pros-phosphohistidine intermediate.

It localises to the cytoplasm. Its function is as follows. General (non sugar-specific) component of the phosphoenolpyruvate-dependent sugar phosphotransferase system (sugar PTS). This major carbohydrate active-transport system catalyzes the phosphorylation of incoming sugar substrates concomitantly with their translocation across the cell membrane. The phosphoryl group from phosphoenolpyruvate (PEP) is transferred to the phosphoryl carrier protein HPr by enzyme I. Phospho-HPr then transfers it to the PTS EIIA domain. The chain is Phosphocarrier protein HPr (ptsH) from Klebsiella pneumoniae.